The following is a 321-amino-acid chain: Aspartate carbamoyltransferase catalytic subunit (321 aa).

Carbamoyl phosphate contacts are provided by arginine 65 and threonine 66. Lysine 93 is a binding site for L-aspartate. Carbamoyl phosphate is bound by residues arginine 115, histidine 143, and glutamine 146. Residues arginine 176 and arginine 230 each coordinate L-aspartate. Residues glycine 271 and proline 272 each contribute to the carbamoyl phosphate site.

The protein belongs to the aspartate/ornithine carbamoyltransferase superfamily. ATCase family. Heterododecamer (2C3:3R2) of six catalytic PyrB chains organized as two trimers (C3), and six regulatory PyrI chains organized as three dimers (R2).

The enzyme catalyses carbamoyl phosphate + L-aspartate = N-carbamoyl-L-aspartate + phosphate + H(+). Its pathway is pyrimidine metabolism; UMP biosynthesis via de novo pathway; (S)-dihydroorotate from bicarbonate: step 2/3. Functionally, catalyzes the condensation of carbamoyl phosphate and aspartate to form carbamoyl aspartate and inorganic phosphate, the committed step in the de novo pyrimidine nucleotide biosynthesis pathway. This chain is Aspartate carbamoyltransferase catalytic subunit, found in Bartonella bacilliformis (strain ATCC 35685 / KC583 / Herrer 020/F12,63).